The chain runs to 426 residues: 5-methylthioadenosine/S-adenosylhomocysteine deaminase (426 aa).

2 residues coordinate Zn(2+): H60 and H62. 2 residues coordinate substrate: E89 and H179. Zn(2+) is bound at residue H206. Residues E209 and D294 each coordinate substrate. A Zn(2+)-binding site is contributed by D294.

This sequence belongs to the metallo-dependent hydrolases superfamily. MTA/SAH deaminase family. Zn(2+) serves as cofactor.

The catalysed reaction is S-adenosyl-L-homocysteine + H2O + H(+) = S-inosyl-L-homocysteine + NH4(+). The enzyme catalyses S-methyl-5'-thioadenosine + H2O + H(+) = S-methyl-5'-thioinosine + NH4(+). In terms of biological role, catalyzes the deamination of 5-methylthioadenosine and S-adenosyl-L-homocysteine into 5-methylthioinosine and S-inosyl-L-homocysteine, respectively. Is also able to deaminate adenosine. This Dictyoglomus thermophilum (strain ATCC 35947 / DSM 3960 / H-6-12) protein is 5-methylthioadenosine/S-adenosylhomocysteine deaminase.